Here is a 139-residue protein sequence, read N- to C-terminus: Peptide methionine sulfoxide reductase MsrB (139 aa).

The MsrB domain maps to 8-130 (DQEWRQQLTD…NSASLRFHSA (123 aa)). 4 residues coordinate Zn(2+): Cys-47, Cys-50, Cys-96, and Cys-99. Cys-119 serves as the catalytic Nucleophile.

The protein belongs to the MsrB Met sulfoxide reductase family. Requires Zn(2+) as cofactor.

The catalysed reaction is L-methionyl-[protein] + [thioredoxin]-disulfide + H2O = L-methionyl-(R)-S-oxide-[protein] + [thioredoxin]-dithiol. The sequence is that of Peptide methionine sulfoxide reductase MsrB from Hahella chejuensis (strain KCTC 2396).